The following is a 279-amino-acid chain: Large ribosomal subunit protein uL2 (279 aa).

2 disordered regions span residues P29–K59 and V224–R279. The segment covering T50–K59 has biased composition (basic residues). Residues P253–I268 are compositionally biased toward basic and acidic residues. A compositionally biased stretch (basic residues) spans V269–R279.

This sequence belongs to the universal ribosomal protein uL2 family. Part of the 50S ribosomal subunit. Forms a bridge to the 30S subunit in the 70S ribosome.

Functionally, one of the primary rRNA binding proteins. Required for association of the 30S and 50S subunits to form the 70S ribosome, for tRNA binding and peptide bond formation. It has been suggested to have peptidyltransferase activity; this is somewhat controversial. Makes several contacts with the 16S rRNA in the 70S ribosome. This chain is Large ribosomal subunit protein uL2, found in Paenarthrobacter aurescens (strain TC1).